The chain runs to 434 residues: Enolase (434 aa).

Q165 is a binding site for (2R)-2-phosphoglycerate. Catalysis depends on E207, which acts as the Proton donor. Mg(2+) is bound by residues D244, E291, and D318. 4 residues coordinate (2R)-2-phosphoglycerate: K343, R372, S373, and K394. The Proton acceptor role is filled by K343.

The protein belongs to the enolase family. Requires Mg(2+) as cofactor.

It localises to the cytoplasm. The protein resides in the secreted. Its subcellular location is the cell surface. It catalyses the reaction (2R)-2-phosphoglycerate = phosphoenolpyruvate + H2O. It participates in carbohydrate degradation; glycolysis; pyruvate from D-glyceraldehyde 3-phosphate: step 4/5. Its function is as follows. Catalyzes the reversible conversion of 2-phosphoglycerate (2-PG) into phosphoenolpyruvate (PEP). It is essential for the degradation of carbohydrates via glycolysis. The chain is Enolase from Staphylococcus haemolyticus (strain JCSC1435).